Reading from the N-terminus, the 229-residue chain is Potassium/proton antiporter CemA (229 aa).

3 consecutive transmembrane segments (helical) span residues 7 to 27 (FTPL…SLSF), 114 to 134 (IICF…LVIL), and 189 to 209 (ILSG…KFWI).

The protein belongs to the CemA family.

It is found in the plastid. It localises to the chloroplast inner membrane. The enzyme catalyses K(+)(in) + H(+)(out) = K(+)(out) + H(+)(in). Functionally, contributes to K(+)/H(+) antiport activity by supporting proton efflux to control proton extrusion and homeostasis in chloroplasts in a light-dependent manner to modulate photosynthesis. Prevents excessive induction of non-photochemical quenching (NPQ) under continuous-light conditions. Indirectly promotes efficient inorganic carbon uptake into chloroplasts. The sequence is that of Potassium/proton antiporter CemA from Panax ginseng (Korean ginseng).